The chain runs to 211 residues: MAKIKLLSIDGNFAKELEVTSDLFVEVPHKQAMFDSVLAENAAERQGTHSTLTKGEVRGGGKKPWRQKHTGKARTGSTRNPHWTGGGVVFGPKPNRNYNLKVNAKVRLLAFKSALTIKLNEGKMLGLVANSDLETPSTKKMVNFINNANLENQKVLLVIADHFSNIKKSTNNLQKVTTKLWYQVSVRDLMHANVVVVAEEAFTNYARKVSK.

The segment at Glu44–Phe90 is disordered. Basic residues predominate over residues Gly60 to Lys72.

The protein belongs to the universal ribosomal protein uL4 family. Part of the 50S ribosomal subunit.

In terms of biological role, one of the primary rRNA binding proteins, this protein initially binds near the 5'-end of the 23S rRNA. It is important during the early stages of 50S assembly. It makes multiple contacts with different domains of the 23S rRNA in the assembled 50S subunit and ribosome. Its function is as follows. Forms part of the polypeptide exit tunnel. The sequence is that of Large ribosomal subunit protein uL4 from Ureaplasma urealyticum serovar 10 (strain ATCC 33699 / Western).